Here is a 276-residue protein sequence, read N- to C-terminus: MLMITSFANPRVAQAFVDYMATQGIILTIQQHAQSDVWLADESQAGRVRAELARFLENPADPRYLAASWQSGQTNSGLRYQRFPFFATLRHNAGPFTWAILLICIAVFILQNLLGDQPVMIWLAWPYDPSLQFEAWRYFSHAFMHFSLMHILFNLLWWWYLGGAVEKRIGSGKLVVITVISALLSGFVQHQFSGPWFGGLSGVVYALMGYVWLRGERDPQSGIYLQRGLILFSLVWLIAGWFDVFGMAIANGAHVAGLATGLAMAFVDTLHGRKRA.

The next 6 helical transmembrane spans lie at 94-114, 142-162, 169-189, 192-212, 229-249, and 252-272; these read GPFTWAILLICIAVFILQNLL, AFMHFSLMHILFNLLWWWYLG, IGSGKLVVITVISALLSGFVQ, FSGPWFGGLSGVVYALMGYVW, LILFSLVWLIAGWFDVFGMAI, and GAHVAGLATGLAMAFVDTLHG. Ser201 serves as the catalytic Nucleophile. The active site involves His254.

It belongs to the peptidase S54 family.

Its subcellular location is the cell inner membrane. It catalyses the reaction Cleaves type-1 transmembrane domains using a catalytic dyad composed of serine and histidine that are contributed by different transmembrane domains.. Its function is as follows. Rhomboid-type serine protease that catalyzes intramembrane proteolysis. The polypeptide is Rhomboid protease GlpG (Klebsiella pneumoniae (strain 342)).